Reading from the N-terminus, the 332-residue chain is D-alanine--D-alanine ligase (332 aa).

The ATP-grasp domain maps to 112–312 (KRIWRADGLP…YPDLCLRILA (201 aa)). 138-193 (FQELGAPMIVKPSREGSTIGLTKVTSLGQCEQAYRLAAQHDPEVLCEQFIDGDETT) is an ATP binding site. The Mg(2+) site is built by Asp-265, Glu-279, and Asn-281.

Belongs to the D-alanine--D-alanine ligase family. Mg(2+) serves as cofactor. Requires Mn(2+) as cofactor.

It is found in the cytoplasm. It carries out the reaction 2 D-alanine + ATP = D-alanyl-D-alanine + ADP + phosphate + H(+). Its pathway is cell wall biogenesis; peptidoglycan biosynthesis. In terms of biological role, cell wall formation. The sequence is that of D-alanine--D-alanine ligase from Acidovorax ebreus (strain TPSY) (Diaphorobacter sp. (strain TPSY)).